The primary structure comprises 185 residues: Elongation factor P (185 aa).

The protein belongs to the elongation factor P family.

It localises to the cytoplasm. It participates in protein biosynthesis; polypeptide chain elongation. Its function is as follows. Involved in peptide bond synthesis. Stimulates efficient translation and peptide-bond synthesis on native or reconstituted 70S ribosomes in vitro. Probably functions indirectly by altering the affinity of the ribosome for aminoacyl-tRNA, thus increasing their reactivity as acceptors for peptidyl transferase. This chain is Elongation factor P, found in Bacillus cereus (strain 03BB102).